A 355-amino-acid chain; its full sequence is Protein DVR-1 (355 aa).

The first 15 residues, 1 to 15, serve as a signal peptide directing secretion; sequence MFLVLLRACLLTLSL. A propeptide spanning residues 16–240 is cleaved from the precursor; it reads CSPAEDDGLV…PLQCRSRRKR (225 aa). N-linked (GlcNAc...) asparagine glycans are attached at residues Asn108, Asn179, and Asn296. 3 disulfide bridges follow: Cys254–Cys320, Cys283–Cys352, and Cys287–Cys354.

Belongs to the TGF-beta family. In terms of assembly, homodimer. As to expression, abundant in ovaries and eggs, and equally distributed among all blastomeres.

It is found in the secreted. Serves to facilitate the differentiation of either mesoderm or endoderm either as a cofactor in an instructive signal or by providing permissive environment. In Danio rerio (Zebrafish), this protein is Protein DVR-1 (dvr1).